The following is a 150-amino-acid chain: Catabolic 3-dehydroquinase (150 aa).

Y24 (proton acceptor) is an active-site residue. N75, H81, and D88 together coordinate substrate. Residue H101 is the Proton donor of the active site. Residues 102-103 (VS) and R112 each bind substrate.

This sequence belongs to the type-II 3-dehydroquinase family. As to quaternary structure, homododecamer. Adopts a ring-like structure, composed of an arrangement of two hexameric rings stacked on top of one another.

It carries out the reaction 3-dehydroquinate = 3-dehydroshikimate + H2O. It functions in the pathway aromatic compound metabolism; 3,4-dihydroxybenzoate biosynthesis; 3,4-dihydroxybenzoate from 3-dehydroquinate: step 1/2. Functionally, is involved in the catabolism of quinate. Allows the utilization of quinate as carbon source via the beta-ketoadipate pathway. In Aspergillus clavatus (strain ATCC 1007 / CBS 513.65 / DSM 816 / NCTC 3887 / NRRL 1 / QM 1276 / 107), this protein is Catabolic 3-dehydroquinase.